The chain runs to 259 residues: 5'-nucleotidase SurE (259 aa).

Positions 8, 9, 41, and 100 each coordinate a divalent metal cation.

This sequence belongs to the SurE nucleotidase family. The cofactor is a divalent metal cation.

It is found in the cytoplasm. It carries out the reaction a ribonucleoside 5'-phosphate + H2O = a ribonucleoside + phosphate. Functionally, nucleotidase that shows phosphatase activity on nucleoside 5'-monophosphates. The protein is 5'-nucleotidase SurE of Natranaerobius thermophilus (strain ATCC BAA-1301 / DSM 18059 / JW/NM-WN-LF).